The primary structure comprises 478 residues: Zinc metalloproteinase/disintegrin (478 aa).

The signal sequence occupies residues 1–20; the sequence is MIEVLLVTICLAAFPYQGSS. A propeptide spanning residues 21–187 is cleaved from the precursor; that stretch reads IILESGNVND…PIKKASQSNL (167 aa). Cystine bridges form between Cys-304-Cys-384, Cys-344-Cys-368, and Cys-346-Cys-351. His-329 is a binding site for Zn(2+). The active site involves Glu-330. Zn(2+) contacts are provided by His-333 and His-339. The propeptide occupies 390 to 405; the sequence is LRTDTVSTPVSGNELL. Positions 397 to 478 constitute a Disintegrin domain; the sequence is TPVSGNELLE…AGCPRNPFHA (82 aa). Cystine bridges form between Cys-411–Cys-426, Cys-413–Cys-421, Cys-420–Cys-443, Cys-434–Cys-440, Cys-439–Cys-464, and Cys-452–Cys-471. The short motif at 456–458 is the Cell attachment site element; sequence RGD.

The protein belongs to the venom metalloproteinase (M12B) family. P-II subfamily. P-IIa sub-subfamily. Monomer. In terms of tissue distribution, expressed by the venom gland.

The protein localises to the secreted. In terms of biological role, binds alpha-5/beta-1 (ITGAV/ITGB1), alpha-V/beta-3 (ITGAV/ITGB3) and alpha-M/beta-2 (ITGAM/ITGB2) integrins. Is a potent inhibitor of platelet aggregation induced by ADP, collagen, and thrombin. Induces neutrophil chemotaxis and inhibits the chemotaxis of human neutrophils toward fMLP, IL-8, and jarastatin itself. Directly activates an integrin-coupled signaling and modulate the MAPK pathway in different ways, leading the neutrophils to express different functional response. Induces Erk-2 translocation to nucleus and a delay of the spontaneous apoptosis of neutrophils. Increases the IL-8 mRNA levels in neutrophils. When injected simultaneously with melanoma cells in mice, jarastatin, flavoridin (FL) and kistrin (KR) significantly reduce tumor lung colonization. Inhibits mouse melanoma B16F10 cell growth in vitro. When it interacts with melanoma cells, it induces actin cytoskeleton rearrangement, increasing actin polymerization and PTK2/FAK1 phosphorylation. Interferes with NF-kappaB translocation in melanoma cells. This is Zinc metalloproteinase/disintegrin from Bothrops jararaca (Jararaca).